Here is a 109-residue protein sequence, read N- to C-terminus: Ribonuclease P protein component (109 aa).

This sequence belongs to the RnpA family. Consists of a catalytic RNA component (M1 or rnpB) and a protein subunit.

The catalysed reaction is Endonucleolytic cleavage of RNA, removing 5'-extranucleotides from tRNA precursor.. RNaseP catalyzes the removal of the 5'-leader sequence from pre-tRNA to produce the mature 5'-terminus. It can also cleave other RNA substrates such as 4.5S RNA. The protein component plays an auxiliary but essential role in vivo by binding to the 5'-leader sequence and broadening the substrate specificity of the ribozyme. The chain is Ribonuclease P protein component from Nitratiruptor sp. (strain SB155-2).